Reading from the N-terminus, the 84-residue chain is Small ribosomal subunit protein bS18 (84 aa).

It belongs to the bacterial ribosomal protein bS18 family. In terms of assembly, part of the 30S ribosomal subunit. Forms a tight heterodimer with protein bS6.

Binds as a heterodimer with protein bS6 to the central domain of the 16S rRNA, where it helps stabilize the platform of the 30S subunit. The protein is Small ribosomal subunit protein bS18 of Polynucleobacter necessarius subsp. necessarius (strain STIR1).